Reading from the N-terminus, the 265-residue chain is UPF0354 protein GWCH70_2742 (265 aa).

Belongs to the UPF0354 family.

The sequence is that of UPF0354 protein GWCH70_2742 from Geobacillus sp. (strain WCH70).